The sequence spans 336 residues: MIEADRLISASGGREEEVIDRAIRPKLLADYTGQDPVCEQMEIFIAAARQRGEALDHLLIFGPPGLGKTTLANIVANEMGVNIKTTSGPVLEKAGDLAALLTNLEPNDVLFIDEIHRLSPVVEEVLYPAMEDYQLDIMIGEGPAARSIKLDLPPFTLIGATTRAGSLTSPLRDRFGIVQRLEFYNVKDLTDIVARSARCLGLDMTEDGALEVARRSRGTPRIANRLLRRVRDFAQVKSDGRIDGPIAARAMDMLDVDNEGFDFMDRKLLLAVIDKFLGGPVGLDNLAAAIGEEKDTIEDVLEPYLIQQGYLQRTPRGRIATPRAYAHFGLQRPDEG.

A large ATPase domain (RuvB-L) region spans residues 4 to 184; sequence ADRLISASGG…FGIVQRLEFY (181 aa). ATP-binding positions include Ile23, Arg24, Gly65, Lys68, Thr69, Thr70, 131 to 133, Arg174, Tyr184, and Arg221; that span reads EDY. Thr69 lines the Mg(2+) pocket. The interval 185–255 is small ATPAse domain (RuvB-S); sequence NVKDLTDIVA…IAARAMDMLD (71 aa). A head domain (RuvB-H) region spans residues 258–336; that stretch reads NEGFDFMDRK…HFGLQRPDEG (79 aa). DNA-binding residues include Arg313 and Arg318.

The protein belongs to the RuvB family. As to quaternary structure, homohexamer. Forms an RuvA(8)-RuvB(12)-Holliday junction (HJ) complex. HJ DNA is sandwiched between 2 RuvA tetramers; dsDNA enters through RuvA and exits via RuvB. An RuvB hexamer assembles on each DNA strand where it exits the tetramer. Each RuvB hexamer is contacted by two RuvA subunits (via domain III) on 2 adjacent RuvB subunits; this complex drives branch migration. In the full resolvosome a probable DNA-RuvA(4)-RuvB(12)-RuvC(2) complex forms which resolves the HJ.

It localises to the cytoplasm. It catalyses the reaction ATP + H2O = ADP + phosphate + H(+). The RuvA-RuvB-RuvC complex processes Holliday junction (HJ) DNA during genetic recombination and DNA repair, while the RuvA-RuvB complex plays an important role in the rescue of blocked DNA replication forks via replication fork reversal (RFR). RuvA specifically binds to HJ cruciform DNA, conferring on it an open structure. The RuvB hexamer acts as an ATP-dependent pump, pulling dsDNA into and through the RuvAB complex. RuvB forms 2 homohexamers on either side of HJ DNA bound by 1 or 2 RuvA tetramers; 4 subunits per hexamer contact DNA at a time. Coordinated motions by a converter formed by DNA-disengaged RuvB subunits stimulates ATP hydrolysis and nucleotide exchange. Immobilization of the converter enables RuvB to convert the ATP-contained energy into a lever motion, pulling 2 nucleotides of DNA out of the RuvA tetramer per ATP hydrolyzed, thus driving DNA branch migration. The RuvB motors rotate together with the DNA substrate, which together with the progressing nucleotide cycle form the mechanistic basis for DNA recombination by continuous HJ branch migration. Branch migration allows RuvC to scan DNA until it finds its consensus sequence, where it cleaves and resolves cruciform DNA. In Aeromonas hydrophila subsp. hydrophila (strain ATCC 7966 / DSM 30187 / BCRC 13018 / CCUG 14551 / JCM 1027 / KCTC 2358 / NCIMB 9240 / NCTC 8049), this protein is Holliday junction branch migration complex subunit RuvB.